The chain runs to 714 residues: Structure-specific endonuclease subunit SLX4 2 (714 aa).

Basic and acidic residues-rich tracts occupy residues 1 to 14 (MSPE…EDNL) and 24 to 34 (IHEETLAEESH). Disordered stretches follow at residues 1-114 (MSPE…EQQG) and 338-369 (SSGP…KTPQ). A compositionally biased stretch (polar residues) spans 36 to 46 (QAIQRSISRLS). A compositionally biased stretch (basic residues) spans 79–92 (KTKKRKLKVSKPRK).

The protein belongs to the SLX4 family. Forms a heterodimer with SLX1. Phosphorylated in response to DNA damage.

The protein resides in the nucleus. Functionally, regulatory subunit of the SLX1-SLX4 structure-specific endonuclease that resolves DNA secondary structures generated during DNA repair and recombination. Has endonuclease activity towards branched DNA substrates, introducing single-strand cuts in duplex DNA close to junctions with ss-DNA. The polypeptide is Structure-specific endonuclease subunit SLX4 2 (Candida tropicalis (strain ATCC MYA-3404 / T1) (Yeast)).